The sequence spans 907 residues: Alanine--tRNA ligase (907 aa).

Zn(2+) is bound by residues H602, H606, C706, and H710.

This sequence belongs to the class-II aminoacyl-tRNA synthetase family. Zn(2+) serves as cofactor.

It is found in the cytoplasm. The catalysed reaction is tRNA(Ala) + L-alanine + ATP = L-alanyl-tRNA(Ala) + AMP + diphosphate. Its function is as follows. Catalyzes the attachment of alanine to tRNA(Ala) in a two-step reaction: alanine is first activated by ATP to form Ala-AMP and then transferred to the acceptor end of tRNA(Ala). Also edits incorrectly charged Ser-tRNA(Ala) and Gly-tRNA(Ala) via its editing domain. The protein is Alanine--tRNA ligase of Thermofilum pendens (strain DSM 2475 / Hrk 5).